The sequence spans 622 residues: Histone-arginine methyltransferase CARMER (622 aa).

One can recognise an SAM-dependent MTase PRMT-type domain in the interval 118 to 425; that stretch reads ASQYFQFYGY…QRQSYDVEID (308 aa). The S-adenosyl-L-methionine site is built by Q131, R140, G164, E186, E215, and T243. Position 478 is an asymmetric dimethylarginine; by autocatalysis (R478). Disordered stretches follow at residues 513–556 and 602–622; these read ANGG…QQQQ and QPILNSHHHHPGQPIHGNQFY. Over residues 536–556 the composition is skewed to low complexity; the sequence is QQQQQQQQQQQQAAVGPQQQQ.

Belongs to the class I-like SAM-binding methyltransferase superfamily. Protein arginine N-methyltransferase family. As to quaternary structure, homodimer. In terms of processing, the dimethylated protein is the major form.

The protein resides in the cytoplasm. The protein localises to the nucleus. The enzyme catalyses L-arginyl-[protein] + 2 S-adenosyl-L-methionine = N(omega),N(omega)-dimethyl-L-arginyl-[protein] + 2 S-adenosyl-L-homocysteine + 2 H(+). Its function is as follows. Methylates (mono- and asymmetric dimethylation) the guanidino nitrogens of arginyl residues in proteins. May methylate histone H3 at 'Arg-17' and activate transcription via chromatin remodeling. In Anopheles gambiae (African malaria mosquito), this protein is Histone-arginine methyltransferase CARMER.